Consider the following 159-residue polypeptide: Ribosomal RNA large subunit methyltransferase H (159 aa).

S-adenosyl-L-methionine contacts are provided by residues Leu76, Gly108, and 127–132 (FSKMTF).

Belongs to the RNA methyltransferase RlmH family. Homodimer.

The protein localises to the cytoplasm. It catalyses the reaction pseudouridine(1915) in 23S rRNA + S-adenosyl-L-methionine = N(3)-methylpseudouridine(1915) in 23S rRNA + S-adenosyl-L-homocysteine + H(+). Specifically methylates the pseudouridine at position 1915 (m3Psi1915) in 23S rRNA. In Clostridium botulinum (strain Eklund 17B / Type B), this protein is Ribosomal RNA large subunit methyltransferase H.